The primary structure comprises 126 residues: Glycine cleavage system H protein (126 aa).

Residues 23–104 (KVRVGITDFA…YDEGWMIEII (82 aa)) enclose the Lipoyl-binding domain. Lysine 64 carries the post-translational modification N6-lipoyllysine.

Belongs to the GcvH family. In terms of assembly, the glycine cleavage system is composed of four proteins: P, T, L and H. Requires (R)-lipoate as cofactor.

In terms of biological role, the glycine cleavage system catalyzes the degradation of glycine. The H protein shuttles the methylamine group of glycine from the P protein to the T protein. This chain is Glycine cleavage system H protein, found in Chlorobium phaeobacteroides (strain BS1).